A 456-amino-acid polypeptide reads, in one-letter code: Putrescine--pyruvate aminotransferase (456 aa).

Tyr-156 is a substrate binding site. Asp-262 serves as a coordination point for pyridoxal 5'-phosphate. Lys-291 bears the N6-(pyridoxal phosphate)lysine mark. Substrate is bound by residues Gly-322 and Arg-417.

This sequence belongs to the class-III pyridoxal-phosphate-dependent aminotransferase family. Requires pyridoxal 5'-phosphate as cofactor.

The catalysed reaction is putrescine + pyruvate = 4-aminobutanal + L-alanine. It functions in the pathway amine and polyamine degradation; putrescine degradation; 4-aminobutanal from putrescine (transaminase route). In terms of biological role, involved in the putrescine catabolism. Catalyzes the transfer of the amino group from putrescine to pyruvate to yield 4-aminobutanal and alanine. The sequence is that of Putrescine--pyruvate aminotransferase from Pseudomonas aeruginosa (strain ATCC 15692 / DSM 22644 / CIP 104116 / JCM 14847 / LMG 12228 / 1C / PRS 101 / PAO1).